Consider the following 27-residue polypeptide: Ranatuerin-2Cb (27 aa).

Cysteine 20 and cysteine 25 are joined by a disulfide.

Expressed by the skin glands.

It is found in the secreted. Functionally, antibacterial activity against Gram-positive bacterium S.aureus (MIC=40 uM) and Gram-negative bacterium E.coli (MIC=2 uM). Has activity against C.albicans (MIC=46 uM). The chain is Ranatuerin-2Cb from Lithobates clamitans (Green frog).